Here is a 783-residue protein sequence, read N- to C-terminus: MLLGFRRGRRSHFKHIIHGLLPAASVAPKAAVPRTPPPRSPNPSPERPRSALAAAILATTLTGRTVAIPQPRQRSRSESDVSSVEQDSFIEPYATTSQLRPRPNWQSEMGRRSSLPSFETLDYGDEEDIETQLSSSGKELGDVSAREDRGGHSDDLYAVPHRNQVPLLHEVNSEDDENISHQDGFPGSPPAPQRTQQKDGKHPVLNLKDEKPPLCEKPPPSPDITGRARQRYTEITREKFEALKEENMDLNNMNQSLTLELNTMKQAMKELQLKLKGMEKEKRKLKEAEKASSQEVAAPELLYLRKQAQELVDENDGLKMTVHRLNVELSRYQTKFRHLSKEESLNIEGLPSKGPIPPWLLDIKYLSPLLLAYEDMMKEKDELNATLKEEMRMFRMRVQEVVKENEELHQELNKSSAVTSEEWRQLQTQAKLVLEENKLLLEQLEIQQRKAKDSHQERLQEVSKLTKQLMLLEAKTHGQEKELAENREQLEILRAKCQELKTHSDGKIAVEVHKSIVNELKSQLQKEEEKERAEMEELMEKLTVLQAQKKSLLLEKNSLTEQNKALEAELERAQKINRKSQKKIEVLKKQVEKAMGNEMSAHQYLANLVGLAENITQERDSLMCLAKCLESEKDGVLNKVIKSNIRLGKLEEKVKGYKKQAALKLGDISHRLLEQQEDFAGKTAQYRQEMRHLHQVLKDKQEVLDQALQQNREMEGELEVIWESTFRENRRIRELLQDTLTRTGVQDNPRALVAPSLNGVSQADLLDGCDVCSYDLKSHAPTC.

Positions 28–49 are disordered; the sequence is PKAAVPRTPPPRSPNPSPERPR. A compositionally biased stretch (pro residues) spans 34 to 45; it reads RTPPPRSPNPSP. Ser50 carries the post-translational modification Phosphoserine. Disordered regions lie at residues 63–157 and 176–226; these read GRTV…DDLY and DENI…DITG. The segment covering 94-107 has biased composition (polar residues); that stretch reads ATTSQLRPRPNWQS. 2 stretches are compositionally biased toward basic and acidic residues: residues 139 to 155 and 196 to 214; these read ELGD…HSDD and QQKD…KPPL. 2 coiled-coil regions span residues 234–333 and 369–719; these read EITR…SRYQ and LLLA…GELE.

The protein resides in the cytoplasm. It is found in the cytosol. It localises to the cytoskeleton. The protein localises to the microtubule organizing center. Its subcellular location is the centrosome. The protein resides in the spindle pole. It is found in the centriole. It localises to the mitochondrion intermembrane space. Its function is as follows. Required for ciliogenesis. Also plays a role in mitochondrial metabolism where it may modulate complex IV activity. The polypeptide is Centrosomal protein of 89 kDa (CEP89) (Homo sapiens (Human)).